A 138-amino-acid polypeptide reads, in one-letter code: Protein Rrf1 (138 aa).

Positions 4–116 (RILVVQEDPD…LLLALVDRAL (113 aa)) constitute a Response regulatory domain. A 4-aspartylphosphate mark is found at aspartate 13 and aspartate 53.

Functionally, may be involved in regulation of gene transcription. Belongs to the family of response regulators, and members of this family involved in the regulation of gene transcription are two-domain proteins. This protein contains only the N-terminal phosphorylation domain and not the C-terminal DNA-binding domain but it may bind to Rrf2 protein and the latter may bind to DNA. In Nitratidesulfovibrio vulgaris (strain ATCC 29579 / DSM 644 / CCUG 34227 / NCIMB 8303 / VKM B-1760 / Hildenborough) (Desulfovibrio vulgaris), this protein is Protein Rrf1 (rrf1).